A 553-amino-acid polypeptide reads, in one-letter code: Vacuolar fusion protein MON1 homolog B (553 aa).

Residue methionine 1 is modified to N-acetylmethionine. Disordered stretches follow at residues 1–111 and 534–553; these read MEAG…DEDW and STPPSTSADQAPNNGLFTGL. Positions 23 to 35 are enriched in basic and acidic residues; sequence FPREEAGDSERVH. Residues 52–72 show a composition bias toward polar residues; that stretch reads KDQPSSLLSPLPQTEAASSTC. Serine 57 carries the post-translational modification Phosphoserine. Over residues 78 to 95 the composition is skewed to low complexity; it reads AAASDSSPPGEPESNSEG. Acidic residues predominate over residues 96 to 108; sequence QGEDPDDGGDPSD. Over residues 541–553 the composition is skewed to polar residues; it reads ADQAPNNGLFTGL.

Belongs to the MON1/SAND family. In terms of assembly, interacts with CCNT2; down-regulates CCNT2-mediated activation of viral promoters during herpes simplex virus 1/HHV-1 infection. Found in a complex with RMC1, CCZ1 MON1A and MON1B.

The polypeptide is Vacuolar fusion protein MON1 homolog B (Mon1b) (Mus musculus (Mouse)).